A 187-amino-acid chain; its full sequence is Peptide deformylase 1 (187 aa).

2 residues coordinate Fe cation: Cys-107 and His-149. Glu-150 is an active-site residue. His-153 contributes to the Fe cation binding site.

It belongs to the polypeptide deformylase family. Fe(2+) serves as cofactor.

It carries out the reaction N-terminal N-formyl-L-methionyl-[peptide] + H2O = N-terminal L-methionyl-[peptide] + formate. Its function is as follows. Removes the formyl group from the N-terminal Met of newly synthesized proteins. Requires at least a dipeptide for an efficient rate of reaction. N-terminal L-methionine is a prerequisite for activity but the enzyme has broad specificity at other positions. The chain is Peptide deformylase 1 from Nostoc sp. (strain PCC 7120 / SAG 25.82 / UTEX 2576).